The following is a 248-amino-acid chain: tRNA (guanine-N(1)-)-methyltransferase (248 aa).

S-adenosyl-L-methionine-binding positions include Gly-113 and 133–138 (IGDYVL).

This sequence belongs to the RNA methyltransferase TrmD family. Homodimer.

It localises to the cytoplasm. The enzyme catalyses guanosine(37) in tRNA + S-adenosyl-L-methionine = N(1)-methylguanosine(37) in tRNA + S-adenosyl-L-homocysteine + H(+). Its function is as follows. Specifically methylates guanosine-37 in various tRNAs. The polypeptide is tRNA (guanine-N(1)-)-methyltransferase (Shewanella piezotolerans (strain WP3 / JCM 13877)).